We begin with the raw amino-acid sequence, 378 residues long: Chaperone protein DnaJ (378 aa).

Positions 5–69 (EFYDRLGVSK…QKRAAYDQYG (65 aa)) constitute a J domain. The segment at 135–217 (GTEKEVKYHR…CHGTGHEKQA (83 aa)) adopts a CR-type zinc-finger fold. Zn(2+) contacts are provided by Cys-148, Cys-151, Cys-165, Cys-168, Cys-191, Cys-194, Cys-205, and Cys-208. CXXCXGXG motif repeat units follow at residues 148-155 (CRTCNGSG), 165-172 (CGRCHGAG), 191-198 (CDVCHGRG), and 205-212 (CTTCHGTG).

This sequence belongs to the DnaJ family. Homodimer. Zn(2+) serves as cofactor.

Its subcellular location is the cytoplasm. Participates actively in the response to hyperosmotic and heat shock by preventing the aggregation of stress-denatured proteins and by disaggregating proteins, also in an autonomous, DnaK-independent fashion. Unfolded proteins bind initially to DnaJ; upon interaction with the DnaJ-bound protein, DnaK hydrolyzes its bound ATP, resulting in the formation of a stable complex. GrpE releases ADP from DnaK; ATP binding to DnaK triggers the release of the substrate protein, thus completing the reaction cycle. Several rounds of ATP-dependent interactions between DnaJ, DnaK and GrpE are required for fully efficient folding. Also involved, together with DnaK and GrpE, in the DNA replication of plasmids through activation of initiation proteins. The chain is Chaperone protein DnaJ from Streptococcus pneumoniae serotype 4 (strain ATCC BAA-334 / TIGR4).